The primary structure comprises 571 residues: DExH-box ATP-dependent RNA helicase DExH16, mitochondrial (571 aa).

The N-terminal 56 residues, 1–56, are a transit peptide targeting the mitochondrion; it reads MAYSVVRLRKVSALGISRVLQADKGSLWRFHFEPEFGDLLRLGVLTRNYRKNSGSP. In terms of domain architecture, Helicase ATP-binding spans 83 to 212; sequence IARKKKRKVI…HLCGDPAVVP (130 aa). 96-103 provides a ligand contact to ATP; sequence GPTNSGKT. Residues 176-179 carry the DEIH box; degenerate motif; that stretch reads DEIQ. A Helicase C-terminal domain is found at 213 to 399; the sequence is LVEDILKVTG…GLFPTFDLLS (187 aa).

This sequence belongs to the DExH box helicase family. Homodimer; in free form. Component of the mitochondrial degradosome (mtEXO) complex which is a heteropentamer containing 2 copies of SUPV3L1 and 3 copies of PNPT1. Mg(2+) serves as cofactor. Mn(2+) is required as a cofactor. As to expression, weakly expressed.

The protein localises to the nucleus. Its subcellular location is the mitochondrion matrix. It is found in the mitochondrion nucleoid. It carries out the reaction ATP + H2O = ADP + phosphate + H(+). Its activity is regulated as follows. Activated by the presence of mitochondrial RNA. In terms of biological role, major helicase player in mitochondrial RNA metabolism. Component of the mitochondrial degradosome (mtEXO) complex, that degrades 3' overhang double-stranded RNA with a 3'-to-5' directionality in an ATP-dependent manner. ATPase and ATP-dependent multisubstrate helicase, able to unwind double-stranded (ds) DNA and RNA, and RNA/DNA heteroduplexes in the 5'-to-3' direction. Plays a role in the RNA surveillance system in mitochondria; regulates the stability of mature mRNAs, the removal of aberrantly formed mRNAs and the rapid degradation of non coding processing intermediates. Required during pollen development. This Arabidopsis thaliana (Mouse-ear cress) protein is DExH-box ATP-dependent RNA helicase DExH16, mitochondrial.